Reading from the N-terminus, the 381-residue chain is Creatine kinase B-type (381 aa).

Phosphoserine is present on serine 4. Positions 11-98 (KLRFPAEDEF…FDPIIEERHG (88 aa)) constitute a Phosphagen kinase N-terminal domain. Residue threonine 35 is modified to Phosphothreonine. Residue lysine 45 forms a Glycyl lysine isopeptide (Lys-Gly) (interchain with G-Cter in ubiquitin) linkage. Valine 72 provides a ligand contact to creatine. Residues 96–110 (RHGGYQPSDEHKTDL) show a composition bias toward basic and acidic residues. Positions 96 to 123 (RHGGYQPSDEHKTDLNPDNLQGGDDLDP) are disordered. Lysine 107 participates in a covalent cross-link: Glycyl lysine isopeptide (Lys-Gly) (interchain with G-Cter in ubiquitin). Residue tyrosine 125 is modified to Phosphotyrosine. The Phosphagen kinase C-terminal domain occupies 125-367 (YVLSSRVRTG…KLLIEMEQRL (243 aa)). ATP is bound by residues 128–132 (SSRVR), arginine 130, arginine 132, and histidine 191. Positions 130–138 (RVRTGRSIR) are internal MTS-like signal. Serine 199 carries the phosphoserine modification. Glutamate 232 serves as a coordination point for creatine. Arginine 236 contributes to the ATP binding site. 3'-nitrotyrosine is present on tyrosine 269. Residue serine 285 coordinates creatine. Arginine 292 is a binding site for ATP. A Phosphoserine modification is found at serine 309. ATP contacts are provided by residues arginine 320, 320–325 (RGTGGV), and aspartate 335. Threonine 322 bears the Phosphothreonine mark. Lysine 381 is covalently cross-linked (Glycyl lysine isopeptide (Lys-Gly) (interchain with G-Cter in ubiquitin)).

This sequence belongs to the ATP:guanido phosphotransferase family. As to quaternary structure, dimer of identical or non-identical chains, which can be either B (brain type) or M (muscle type). With MM being the major form in skeletal muscle and myocardium, MB existing in myocardium, and BB existing in many tissues, especially brain. Interacts with SLC12A6 (via C-terminus); the interaction may be required for SLC12A6 potassium-chloride cotransport activity. In terms of processing, ubiquitinated by the ECS(ASB9) complex, leading to its degradation by the proteasome. In terms of tissue distribution, expressed in hippocampus and corpus callosum (at protein level).

It is found in the cytoplasm. The protein localises to the cytosol. Its subcellular location is the mitochondrion. The protein resides in the cell membrane. The catalysed reaction is creatine + ATP = N-phosphocreatine + ADP + H(+). In terms of biological role, reversibly catalyzes the transfer of phosphate between ATP and various phosphogens (e.g. creatine phosphate). Creatine kinase isoenzymes play a central role in energy transduction in tissues with large, fluctuating energy demands, such as skeletal muscle, heart, brain and spermatozoa. Acts as a key regulator of adaptive thermogenesis as part of the futile creatine cycle: localizes to the mitochondria of thermogenic fat cells and acts by mediating phosphorylation of creatine to initiate a futile cycle of creatine phosphorylation and dephosphorylation. During the futile creatine cycle, creatine and N-phosphocreatine are in a futile cycle, which dissipates the high energy charge of N-phosphocreatine as heat without performing any mechanical or chemical work. The sequence is that of Creatine kinase B-type from Mus musculus (Mouse).